A 534-amino-acid polypeptide reads, in one-letter code: Arginine transporter 1 (534 aa).

A run of 6 helical transmembrane segments spans residues 35 to 55 (YVLL…YFGW), 99 to 119 (SLFT…GYLL), 126 to 146 (AVAL…AFSG), 154 to 174 (PAFV…LLIV), 182 to 202 (ALIM…PLVL), and 216 to 236 (VCIG…FFFI). Residue Asn-246 is glycosylated (N-linked (GlcNAc...) asparagine). Residues 261–302 (TAQSSPKAVDSPPCDEGASSRGRLAVSHNTERTAPDDEQEKD) form a disordered region. Over residues 289 to 302 (NTERTAPDDEQEKD) the composition is skewed to basic and acidic residues. Helical transmembrane passes span 329 to 349 (AFTF…WVMA), 365 to 385 (YTLE…GVVI), 388 to 408 (IGIM…YVCV), 419 to 439 (FSVI…YVFV), 451 to 471 (LIGV…VLYG), and 483 to 503 (RPVV…LLAM).

The protein belongs to the SLC43A transporter (TC 2.A.1.44) family.

It is found in the cell membrane. It carries out the reaction L-arginine(in) = L-arginine(out). Selective L-arginine transporter that is essential for parasite survival and virulence. Does not require other inorganic ions such as sodium, chloride, potassium or calcium. In Toxoplasma gondii (strain ATCC 50611 / Me49), this protein is Arginine transporter 1.